A 1374-amino-acid chain; its full sequence is Mitogen-activated protein kinase kinase kinase 5 (1374 aa).

The interval proline 68 to glycine 87 is disordered. Low complexity predominate over residues alanine 69–glycine 81. An asymmetric dimethylarginine; by PRMT1 mark is found at arginine 78 and arginine 80. A Phosphoserine; by PIM1 and PKB/AKT1 modification is found at serine 83. Residues methionine 649–threonine 1374 are interaction with PPIA/CYPA. Residues asparagine 680–leucine 938 enclose the Protein kinase domain. ATP contacts are provided by residues leucine 686–valine 694 and lysine 709. Tyrosine 718 bears the Phosphotyrosine mark. The active-site Proton acceptor is the aspartate 803. Phosphothreonine; by autocatalysis is present on threonine 813. Threonine 838 is modified (phosphothreonine; by autocatalysis, MELK and MAP3K6). Threonine 842 bears the Phosphothreonine; by autocatalysis mark. Position 958 is a phosphoserine (serine 958). At serine 966 the chain carries Phosphoserine; by autocatalysis. Phosphoserine occurs at positions 1029 and 1033. Positions serine 1182 to arginine 1209 are disordered. A compositionally biased stretch (acidic residues) spans aspartate 1185–glutamate 1199. Residues leucine 1245–lysine 1285 are a coiled coil.

This sequence belongs to the protein kinase superfamily. STE Ser/Thr protein kinase family. MAP kinase kinase kinase subfamily. In terms of assembly, homodimer when inactive. Binds both upstream activators and downstream substrates in multimolecular complexes. Part of a cytoplasmic complex made of HIPK1, DAB2IP and MAP3K5 in response to TNF. This complex formation promotes MAP3K5-JNK activation and subsequent apoptosis. Interacts with SOCS1 which recognizes phosphorylation of Tyr-718 and induces MAP3K5/ASK1 degradation in endothelial cells. Interacts with the 14-3-3 family proteins such as YWHAB, YWHAE, YWHAQ, YWHAH, YWHAZ and SFN. Interacts with ARRB2, BIRC2, DAB2IP, IGF1R, MAP3K6/ASK2, PGAM5, PIM1, PPP5C, SOCS1, STUB1, TRAF2, TRAF6 and TXN. Interacts with ERN1 in a TRAF2-dependent manner. Interacts with calcineurin subunit PPP3R1. Interacts with PPM1L. Interacts (via N-terminus) with RAF1 and this interaction inhibits the proapoptotic function of MAP3K5. Interacts with DAB2IP (via N-terminus C2 domain); the interaction occurs in a TNF-alpha-dependent manner. Interacts with DUSP13A; may positively regulate apoptosis. Interacts with DAXX. Interacts with RC3H2. Interacts with PPIA/CYPA. Interacts with PRMT1; the interaction results in MAP3K5 methylation by PRMT1 which inhibits MAP3K5 activation. Interacts with TRAF2; the interaction is inhibited by PRMT1. Interacts with TRIM48. (Microbial infection) Interacts with HIV-1 Nef; this interaction inhibits MAP3K5 signaling. It depends on Mg(2+) as a cofactor. Phosphorylated at Thr-838 through autophosphorylation and by MAP3K6/ASK2 which leads to activation. Thr-838 is dephosphorylated by PPP5C. Ser-83 and Ser-1033 are inactivating phosphorylation sites, the former of which is phosphorylated by AKT1. Phosphorylated at Ser-966 which induces association of MAP3K5/ASK1 with the 14-3-3 family proteins and suppresses MAP3K5/ASK1 activity. Calcineurin (CN) dephosphorylates this site. Also dephosphorylated and activated by PGAM5. Phosphorylation at Ser-966 in response to oxidative stress is negatively regulated by PPIA/CYPA. In terms of processing, ubiquitinated. Tumor necrosis factor (TNF) induces TNFR2-dependent ubiquitination, leading to proteasomal degradation. Ubiquitinated by RC3H2 in a TRIM48-dependent manner. Post-translationally, methylation at Arg-78 and Arg-80 by PRMT1 promotes association of MAP3K5 with thioredoxin and negatively regulates MAP3K5 association with TRAF2, inhibiting MAP3K5 activation. Methylation is blocked by ubiquitination of PRMT1 by TRIM48. In terms of tissue distribution, abundantly expressed in heart and pancreas.

The protein resides in the cytoplasm. The protein localises to the endoplasmic reticulum. The enzyme catalyses L-seryl-[protein] + ATP = O-phospho-L-seryl-[protein] + ADP + H(+). The catalysed reaction is L-threonyl-[protein] + ATP = O-phospho-L-threonyl-[protein] + ADP + H(+). Its activity is regulated as follows. Activated by various stressors, including oxidative stress, endoplasmic reticulum stress, and calcium overload, as well as by receptor-mediated inflammatory signals, such as the tumor necrosis factor (TNF) and lipopolysaccharide (LPS). Homophilic association of MAP3K5/ASK1 through the C-terminal coiled-coil domains and the heteromeric complex formation of MAP3K5/ASK1 with the reduced form of thioredoxin (TXN), constitutes an inactive form of the kinase. Upon ROS-induced dissociation of TXN from MAP3K5/ASK1, TRAF2 and TRAF6 are reciprocally recruited to MAP3K5/ASK1 and form the active MAP3K5/ASK1 signalosome, in which TRAF2 and TRAF6 appear to facilitate the active configuration of MAP3K5/ASK1. MAP3K5/ASK1 activity is also regulated through several phosphorylation and dephosphorylation events. Thr-838 is an activating phosphorylation site that is autophosphorylated and phosphorylated by MAP3K6/ASK2 and dephosphorylated by PPP5C. Ser-83 and Ser-1033 are inactivating phosphorylation sites, the former of which is phosphorylated by AKT1. Phosphorylation of Ser-966 induces association of MAP3K5/ASK1 with the 14-3-3 family proteins, which suppresses MAP3K5/ASK1 activity. Calcium/calmodulin-activated protein phosphatase calcineurin (PPP3CA) has been shown to directly dephosphorylate this site. SOCS1 binds to ASK1 by recognizing phosphorylation of Tyr-718 and induces MAP3K5/ASK1 degradation in endothelial cells. Also dephosphorylated and activated by PGAM5. Contains an N-terminal autoinhibitory domain. Once activated targeted for proteasomal degradation by RC3H2-mediated ubiquitination. In terms of biological role, serine/threonine kinase which acts as an essential component of the MAP kinase signal transduction pathway. Plays an important role in the cascades of cellular responses evoked by changes in the environment. Mediates signaling for determination of cell fate such as differentiation and survival. Plays a crucial role in the apoptosis signal transduction pathway through mitochondria-dependent caspase activation. MAP3K5/ASK1 is required for the innate immune response, which is essential for host defense against a wide range of pathogens. Mediates signal transduction of various stressors like oxidative stress as well as by receptor-mediated inflammatory signals, such as the tumor necrosis factor (TNF) or lipopolysaccharide (LPS). Once activated, acts as an upstream activator of the MKK/JNK signal transduction cascade and the p38 MAPK signal transduction cascade through the phosphorylation and activation of several MAP kinase kinases like MAP2K4/SEK1, MAP2K3/MKK3, MAP2K6/MKK6 and MAP2K7/MKK7. These MAP2Ks in turn activate p38 MAPKs and c-jun N-terminal kinases (JNKs). Both p38 MAPK and JNKs control the transcription factors activator protein-1 (AP-1). This is Mitogen-activated protein kinase kinase kinase 5 (MAP3K5) from Homo sapiens (Human).